A 2946-amino-acid chain; its full sequence is Neurobeachin (2946 aa).

A disordered region spans residues 971-995 (ENIKKGKKGNVSTISGLSSQTTGAK). Over residues 980 to 993 (NVSTISGLSSQTTG) the composition is skewed to polar residues. Serine 1011 and serine 1014 each carry phosphoserine. The WD 1 repeat unit spans residues 1326-1368 (TTMFRIPEFKWSPMHQRLLTDLLFALETDVHVWRSHSTKSVMD). Disordered regions lie at residues 1490–1531 (QRDR…LSPI), 1651–1675 (TIKE…HTDS), 1711–1731 (VKKS…PATS), and 1841–1860 (GAVD…VNGA). Residues 1497–1517 (SSHGSSKPQEVPQSVTATAAS) show a composition bias toward polar residues. A Phosphoserine modification is found at serine 1529. Residues serine 1714 and serine 1717 each carry the phosphoserine modification. Residues 1716–1731 (ESLTENPSETLKPATS) show a composition bias toward polar residues. Over residues 1845 to 1855 (SGSSSSSSSSS) the composition is skewed to low complexity. Serine 2138 bears the Phosphoserine mark. One can recognise a BEACH-type PH domain in the interval 2147–2255 (NLAGPVVLST…TVKKVVYSLP (109 aa)). In terms of domain architecture, BEACH spans 2274–2563 (ATPRQLYKSS…QLLIEPHPPR (290 aa)). A Phosphoserine modification is found at serine 2575. WD repeat units lie at residues 2718–2761 (GHWD…HIIG), 2778–2818 (GHDH…RALE), 2860–2899 (EIND…QLYI), and 2902–2941 (GCDA…WHYE).

The protein belongs to the WD repeat neurobeachin family. In terms of assembly, interacts with RII subunit of PKA. As to expression, predominant in many brain structures. Also expressed at medium levels in spleen, thymus, prostate, testis and ovary. Low level expression is seen in heart, kidney, pancreas, skeletal muscle and intestine.

The protein resides in the cytoplasm. It is found in the membrane. Functionally, binds to type II regulatory subunits of protein kinase A and anchors/targets them to the membrane. May anchor the kinase to cytoskeletal and/or organelle-associated proteins. The polypeptide is Neurobeachin (Homo sapiens (Human)).